The chain runs to 77 residues: RNA-binding protein Hfq (77 aa).

The region spanning 9-69 (DQFLNQLRKE…ISTFAPQKNV (61 aa)) is the Sm domain.

It belongs to the Hfq family. In terms of assembly, homohexamer.

RNA chaperone that binds small regulatory RNA (sRNAs) and mRNAs to facilitate mRNA translational regulation in response to envelope stress, environmental stress and changes in metabolite concentrations. Also binds with high specificity to tRNAs. This chain is RNA-binding protein Hfq, found in Shouchella clausii (strain KSM-K16) (Alkalihalobacillus clausii).